The primary structure comprises 385 residues: tRNA-specific 2-thiouridylase MnmA (385 aa).

ATP contacts are provided by residues 18–25 (AMSGGVDS) and Leu-44. Cys-112 functions as the Nucleophile in the catalytic mechanism. A disulfide bond links Cys-112 and Cys-209. Gly-136 provides a ligand contact to ATP. Residues 159-161 (RDQ) are interaction with tRNA. Cys-209 acts as the Cysteine persulfide intermediate in catalysis.

This sequence belongs to the MnmA/TRMU family.

It localises to the cytoplasm. It catalyses the reaction S-sulfanyl-L-cysteinyl-[protein] + uridine(34) in tRNA + AH2 + ATP = 2-thiouridine(34) in tRNA + L-cysteinyl-[protein] + A + AMP + diphosphate + H(+). Its function is as follows. Catalyzes the 2-thiolation of uridine at the wobble position (U34) of tRNA, leading to the formation of s(2)U34. The chain is tRNA-specific 2-thiouridylase MnmA from Methylorubrum populi (strain ATCC BAA-705 / NCIMB 13946 / BJ001) (Methylobacterium populi).